The following is a 201-amino-acid chain: NAD(P)H quinone oxidoreductase PST2 (201 aa).

The Flavodoxin-like domain maps to 6–192; the sequence is VAIIIYSLYH…SIAQQQGEDF (187 aa). FMN contacts are provided by residues 12 to 16 and 112 to 164; these read SLYHH and VFVS…SPWG.

It belongs to the WrbA family. Requires FMN as cofactor.

Its subcellular location is the cell membrane. It catalyses the reaction a quinone + NADH + H(+) = a quinol + NAD(+). The enzyme catalyses a quinone + NADPH + H(+) = a quinol + NADP(+). Functionally, flavodoxin-like protein (FLP) that plays a role in cell wall integrity, oxidative stress protection and virulence. FLPs act as NAD(P)H quinone oxidoreductases. Reduces ubiquinone (coenzyme Q), enabling it to serve as an antioxidant in the membrane. In Candida albicans (strain SC5314 / ATCC MYA-2876) (Yeast), this protein is NAD(P)H quinone oxidoreductase PST2.